Consider the following 425-residue polypeptide: Adenylosuccinate synthetase (425 aa).

GTP-binding positions include 12–18 (GDEGKGK) and 40–42 (GHT). The active-site Proton acceptor is Asp-13. Mg(2+) is bound by residues Asp-13 and Gly-40. IMP contacts are provided by residues 13–16 (DEGK), 38–41 (NAGH), Thr-130, Arg-144, Gln-224, Thr-239, and Arg-301. The active-site Proton donor is the His-41. 297 to 303 (TVSNRRR) serves as a coordination point for substrate. GTP contacts are provided by residues Arg-303, 329–331 (KLD), and 411–413 (STS).

Belongs to the adenylosuccinate synthetase family. In terms of assembly, homodimer. The cofactor is Mg(2+).

It is found in the cytoplasm. It catalyses the reaction IMP + L-aspartate + GTP = N(6)-(1,2-dicarboxyethyl)-AMP + GDP + phosphate + 2 H(+). The protein operates within purine metabolism; AMP biosynthesis via de novo pathway; AMP from IMP: step 1/2. Plays an important role in the de novo pathway of purine nucleotide biosynthesis. Catalyzes the first committed step in the biosynthesis of AMP from IMP. The polypeptide is Adenylosuccinate synthetase (Wolbachia pipientis subsp. Culex pipiens (strain wPip)).